Consider the following 118-residue polypeptide: Group 1 truncated hemoglobin GlbN (118 aa).

Position 70 (H70) interacts with heme.

Belongs to the truncated hemoglobin family. Group I subfamily. As to quaternary structure, monomer. Requires heme as cofactor.

The protein resides in the membrane. The protein is Group 1 truncated hemoglobin GlbN (glbN) of Nostoc sp. (strain MUN 8820).